The chain runs to 141 residues: HTH-type transcriptional repressor NsrR (141 aa).

The HTH rrf2-type domain maps to 2 to 129 (QLTSFTDYAL…DECTIESLLS (128 aa)). The H-T-H motif DNA-binding region spans 28–51 (ITEVTDLFGVSRNHMVKVINRLGQ). [2Fe-2S] cluster contacts are provided by cysteine 91, cysteine 96, and cysteine 102.

Requires [2Fe-2S] cluster as cofactor.

Nitric oxide-sensitive repressor of genes involved in protecting the cell against nitrosative stress. May require iron for activity. This Vibrio parahaemolyticus serotype O3:K6 (strain RIMD 2210633) protein is HTH-type transcriptional repressor NsrR.